The following is a 295-amino-acid chain: ATP synthase gamma chain (295 aa).

Belongs to the ATPase gamma chain family. In terms of assembly, F-type ATPases have 2 components, CF(1) - the catalytic core - and CF(0) - the membrane proton channel. CF(1) has five subunits: alpha(3), beta(3), gamma(1), delta(1), epsilon(1). CF(0) has three main subunits: a, b and c.

The protein resides in the cell inner membrane. In terms of biological role, produces ATP from ADP in the presence of a proton gradient across the membrane. The gamma chain is believed to be important in regulating ATPase activity and the flow of protons through the CF(0) complex. The protein is ATP synthase gamma chain of Campylobacter fetus subsp. fetus (strain 82-40).